Reading from the N-terminus, the 179-residue chain is MSSRVLTPDVVGIDALVHDHQTVLAKAEGGVVAVFANNAPAFYAVTPARLAELLALEEKLARPGSDVALDDQLYQEPQAAPVAVPMGKFAMYPDWQPDADFIRLAALWGVALREPVTTEELTSFIAYWQAEGKVFHHVQWQQKLARSLQIGRASNGGLPKRDVNTVSEPDSQIPPGFRG.

The disordered stretch occupies residues 155 to 179 (NGGLPKRDVNTVSEPDSQIPPGFRG).

The protein belongs to the DnaT family. As to quaternary structure, homooligomerizes. Interacts with PriB. Component of the replication restart primosome. Primosome assembly occurs via a 'hand-off' mechanism. PriA binds to replication forks, subsequently PriB then DnaT bind; DnaT then displaces ssDNA to generate the helicase loading substrate.

In terms of biological role, involved in the restart of stalled replication forks, which reloads the replicative helicase on sites other than the origin of replication. Can function in multiple replication restart pathways. Displaces ssDNA from a PriB-ssDNA complex. Probably forms a spiral filament on ssDNA. The polypeptide is Replication restart protein DnaT (Escherichia coli O8 (strain IAI1)).